A 90-amino-acid polypeptide reads, in one-letter code: MKTLPLVLAVVAFVYLDLAHTLKCRSGNVCILGDDCSEGENVCFQRKNGTGVFGMRVVRGCAASCPSPIGGEEVSCCSTDNCNNSFSRFF.

The N-terminal stretch at 1–21 is a signal peptide; that stretch reads MKTLPLVLAVVAFVYLDLAHT. Disulfide bonds link Cys-24–Cys-43, Cys-36–Cys-61, Cys-65–Cys-76, and Cys-77–Cys-82.

This sequence belongs to the three-finger toxin family. Ancestral subfamily. As to expression, expressed by the venom gland.

It is found in the secreted. The chain is Toxin 3FTx-Psa1 from Psammophis mossambicus (Olive sand snake).